The following is a 218-amino-acid chain: Large ribosomal subunit protein uL4 (218 aa).

Residues 46-102 (ARQGTHSTKTRGEVRGGGRKPFRQKGTGRARQGSIRAPHFTGGGISHGPKPRDYSQR) are disordered. Over residues 62-73 (GGRKPFRQKGTG) the composition is skewed to basic residues.

It belongs to the universal ribosomal protein uL4 family. Part of the 50S ribosomal subunit.

Functionally, one of the primary rRNA binding proteins, this protein initially binds near the 5'-end of the 23S rRNA. It is important during the early stages of 50S assembly. It makes multiple contacts with different domains of the 23S rRNA in the assembled 50S subunit and ribosome. Forms part of the polypeptide exit tunnel. The chain is Large ribosomal subunit protein uL4 from Corynebacterium glutamicum (strain R).